The sequence spans 952 residues: UPF0182 protein SRU_2225 (952 aa).

Helical transmembrane passes span 12–32 (ILLGIIGVVFTVLLVTPGLVV), 52–72 (AQVLLFVLVFLVAGLYFGGNF), 109–129 (LGYVVAGVLSLLFAAGFSGRW), 168–188 (AVVGLAFLGLLALVTGYVIAG), 207–227 (LGANLIFLLLGWAWGFYLDLY), 247–267 (VVIPALYVMVAATLVLAGLVG), and 277–297 (LLGIGGAGYLVLLVGGLVLAP). The tract at residues 917–952 (VPLPDTTGTVPPPTSSDTTGTMTAPTGDVSEVTGGS) is disordered. Positions 931–940 (SSDTTGTMTA) are enriched in polar residues.

The protein belongs to the UPF0182 family.

It is found in the cell membrane. This Salinibacter ruber (strain DSM 13855 / M31) protein is UPF0182 protein SRU_2225.